A 479-amino-acid chain; its full sequence is Type I inositol polyphosphate 5-phosphatase 8 (479 aa).

Catalytic regions lie at residues 300-315 (DKVI…LRAS) and 379-394 (KRRT…WKGD).

Belongs to the inositol polyphosphate 5-phosphatase family.

The chain is Type I inositol polyphosphate 5-phosphatase 8 from Arabidopsis thaliana (Mouse-ear cress).